The chain runs to 210 residues: MTTLETLKWDGKKSGKVSLDLAVAKETSSADLIHRAVLRQLANKRQGTASTLTRSEVRGGGRKPYKQKGTGRARQGSIRTPLRPGGGIIFGPKPRSYNLDMNRKERRLALRTALMSRVSDMKAVEDFGSTLKQPKTSDIINGLARLGIQKTEKVLVILDSPSDIIKKSINNIEKVKLIAADQLNVFDILNANKLVIGQSAIDKIQEVYAS.

Residues 46–85 (QGTASTLTRSEVRGGGRKPYKQKGTGRARQGSIRTPLRPG) form a disordered region. The span at 60–71 (GGRKPYKQKGTG) shows a compositional bias: basic residues.

This sequence belongs to the universal ribosomal protein uL4 family. As to quaternary structure, part of the 50S ribosomal subunit.

One of the primary rRNA binding proteins, this protein initially binds near the 5'-end of the 23S rRNA. It is important during the early stages of 50S assembly. It makes multiple contacts with different domains of the 23S rRNA in the assembled 50S subunit and ribosome. Its function is as follows. Forms part of the polypeptide exit tunnel. This is Large ribosomal subunit protein uL4 from Prochlorococcus marinus (strain AS9601).